Consider the following 224-residue polypeptide: UPF0173 metal-dependent hydrolase TON_1314 (224 aa).

The protein belongs to the UPF0173 family.

In Thermococcus onnurineus (strain NA1), this protein is UPF0173 metal-dependent hydrolase TON_1314.